We begin with the raw amino-acid sequence, 24 residues long: Fibrinogen gamma chain (24 aa).

In terms of assembly, heterohexamer; disulfide linked. Contains 2 sets of 3 non-identical chains (alpha, beta and gamma). The 2 heterotrimers are in head to head conformation with the N-termini in a small central domain. Conversion of fibrinogen to fibrin is triggered by thrombin, which cleaves fibrinopeptides A and B from alpha and beta chains, and thus exposes the N-terminal polymerization sites responsible for the formation of the soft clot. The soft clot is converted into the hard clot by factor XIIIA which catalyzes the epsilon-(gamma-glutamyl)lysine cross-linking between gamma chains (stronger) and between alpha chains (weaker) of different monomers.

The protein resides in the secreted. Functionally, together with fibrinogen alpha (FGA) and fibrinogen beta (FGB), polymerizes to form an insoluble fibrin matrix. Has a major function in hemostasis as one of the primary components of blood clots. In addition, functions during the early stages of wound repair to stabilize the lesion and guide cell migration during re-epithelialization. Was originally thought to be essential for platelet aggregation, based on in vitro studies using anticoagulated blood. However, subsequent studies have shown that it is not absolutely required for thrombus formation in vivo. Enhances expression of SELP in activated platelets via an ITGB3-dependent pathway. Maternal fibrinogen is essential for successful pregnancy. Fibrin deposition is also associated with infection, where it protects against IFNG-mediated hemorrhage. May also facilitate the antibacterial immune response via both innate and T-cell mediated pathways. This is Fibrinogen gamma chain (FGG) from Canis lupus familiaris (Dog).